A 514-amino-acid chain; its full sequence is Membrane-bound lytic murein transglycosylase F (514 aa).

Positions 1 to 30 (MLSNNPLITKFRELFTVALVLALLSGCQWQ) are cleaved as a signal peptide. The interval 31–271 (DDNLTDLEKI…QLEEKYFGHV (241 aa)) is non-LT domain. The LT domain stretch occupies residues 272 to 514 (GSFDYVDTRA…KTIEDPGPSQ (243 aa)). Glu-316 is a catalytic residue. The tract at residues 482–514 (PVPPRQANVDGSLNNEAAISSAEKTIEDPGPSQ) is disordered. A compositionally biased stretch (polar residues) spans 490–499 (VDGSLNNEAA).

In the N-terminal section; belongs to the bacterial solute-binding protein 3 family. This sequence in the C-terminal section; belongs to the transglycosylase Slt family.

It localises to the cell outer membrane. It catalyses the reaction Exolytic cleavage of the (1-&gt;4)-beta-glycosidic linkage between N-acetylmuramic acid (MurNAc) and N-acetylglucosamine (GlcNAc) residues in peptidoglycan, from either the reducing or the non-reducing ends of the peptidoglycan chains, with concomitant formation of a 1,6-anhydrobond in the MurNAc residue.. Functionally, murein-degrading enzyme that degrades murein glycan strands and insoluble, high-molecular weight murein sacculi, with the concomitant formation of a 1,6-anhydromuramoyl product. Lytic transglycosylases (LTs) play an integral role in the metabolism of the peptidoglycan (PG) sacculus. Their lytic action creates space within the PG sacculus to allow for its expansion as well as for the insertion of various structures such as secretion systems and flagella. In Photobacterium profundum (strain SS9), this protein is Membrane-bound lytic murein transglycosylase F.